The chain runs to 1391 residues: DNA-directed RNA polymerase subunit beta' (1391 aa).

Cys70, Cys72, Cys85, and Cys88 together coordinate Zn(2+). Residues Asp461, Asp463, and Asp465 each contribute to the Mg(2+) site. Residues Cys809, Cys882, Cys889, and Cys892 each contribute to the Zn(2+) site.

This sequence belongs to the RNA polymerase beta' chain family. The RNAP catalytic core consists of 2 alpha, 1 beta, 1 beta' and 1 omega subunit. When a sigma factor is associated with the core the holoenzyme is formed, which can initiate transcription. Mg(2+) serves as cofactor. Zn(2+) is required as a cofactor.

The catalysed reaction is RNA(n) + a ribonucleoside 5'-triphosphate = RNA(n+1) + diphosphate. Functionally, DNA-dependent RNA polymerase catalyzes the transcription of DNA into RNA using the four ribonucleoside triphosphates as substrates. The protein is DNA-directed RNA polymerase subunit beta' of Zymomonas mobilis subsp. mobilis (strain ATCC 31821 / ZM4 / CP4).